The chain runs to 602 residues: Elongation factor 4 (602 aa).

A tr-type G domain is found at 7–188; that stretch reads ENIRNFSIIA…AIVELIPPPK (182 aa). GTP-binding positions include 19–24 and 135–138; these read DHGKST and NKID.

This sequence belongs to the TRAFAC class translation factor GTPase superfamily. Classic translation factor GTPase family. LepA subfamily.

The protein resides in the cell inner membrane. The catalysed reaction is GTP + H2O = GDP + phosphate + H(+). In terms of biological role, required for accurate and efficient protein synthesis under certain stress conditions. May act as a fidelity factor of the translation reaction, by catalyzing a one-codon backward translocation of tRNAs on improperly translocated ribosomes. Back-translocation proceeds from a post-translocation (POST) complex to a pre-translocation (PRE) complex, thus giving elongation factor G a second chance to translocate the tRNAs correctly. Binds to ribosomes in a GTP-dependent manner. This Chlamydia abortus (strain DSM 27085 / S26/3) (Chlamydophila abortus) protein is Elongation factor 4.